A 424-amino-acid polypeptide reads, in one-letter code: GTPase Obg (424 aa).

An Obg domain is found at 1 to 158 (MFIDTAKIFV…RWIKLELKLL (158 aa)). Positions 159 to 331 (ADVGLIGFPN…LMKEAARLLS (173 aa)) constitute an OBG-type G domain. Residues 165 to 172 (GFPNVGKS), 190 to 194 (FTTLK), 212 to 215 (DIPG), 282 to 285 (NKSD), and 312 to 314 (SAA) contribute to the GTP site. The Mg(2+) site is built by Ser172 and Thr192. Positions 345–424 (RFIEEEKRFT…LNDFEFDFLL (80 aa)) constitute an OCT domain.

This sequence belongs to the TRAFAC class OBG-HflX-like GTPase superfamily. OBG GTPase family. Monomer. Requires Mg(2+) as cofactor.

It localises to the cytoplasm. Its function is as follows. An essential GTPase which binds GTP, GDP and possibly (p)ppGpp with moderate affinity, with high nucleotide exchange rates and a fairly low GTP hydrolysis rate. Plays a role in control of the cell cycle, stress response, ribosome biogenesis and in those bacteria that undergo differentiation, in morphogenesis control. This chain is GTPase Obg, found in Clostridium botulinum (strain Langeland / NCTC 10281 / Type F).